Here is a 61-residue protein sequence, read N- to C-terminus: Small ribosomal subunit protein uS14 (61 aa).

Cys-24, Cys-27, Cys-40, and Cys-43 together coordinate Zn(2+).

This sequence belongs to the universal ribosomal protein uS14 family. Zinc-binding uS14 subfamily. As to quaternary structure, part of the 30S ribosomal subunit. Contacts proteins S3 and S10. Requires Zn(2+) as cofactor.

Its function is as follows. Binds 16S rRNA, required for the assembly of 30S particles and may also be responsible for determining the conformation of the 16S rRNA at the A site. This chain is Small ribosomal subunit protein uS14, found in Anaeromyxobacter sp. (strain Fw109-5).